Reading from the N-terminus, the 439-residue chain is MAISTPSNGVSHVAKPLPNLKEVNKGIETDSEDRAFWWGALSEPLASLLEANHYTKEVQLHYLRWFYQWILPALGPRPLDGKPYYGSWITHDLSPFEYSLNWKEKSSKQTIRFTIEAVTKQSGTASDPINQLGAKEFLEAVSKDVPGMDLTRFNQFLEATNVPNDCVDDAIAKHPAHFPRSRVWIAFDLEHSGNLMAKSYFLPHWRAIQSGISANTIIGDTVKECNKADGSSYDGSLNAIESYLATFTRPEEAPQMGLLSNDCVAETPGSRLKVYFRSSADTLAKAKDMYNLGGRLKGPKMDASLKGISDFWYHLFGLDSSDPASDDKVCIGNHKCIFVYEMRSSQGSEPDIDVKFHIPMWQLGKTDGQISELLASWFESHGHPDLASRYKSDLGTAFPKHNITGKSVGTHTYISITHTPKTGLYMTMYLSPKLPEFYY.

Substrate-binding positions include W88 to I89, E97, R112, K198, Y200, R271, K273, and Y275.

This sequence belongs to the tryptophan dimethylallyltransferase family.

It catalyses the reaction siccayne + dimethylallyl diphosphate = pestalodiol + diphosphate. It functions in the pathway secondary metabolite biosynthesis. Its function is as follows. Prenyltransferase; part of the gene cluster that mediates the biosynthesis of iso-A82775C, a enylepoxycyclohexane and biosynthetic precursor of the chloropestolide anticancer natural products. Within the cluster, the prenyltransferase iacE prenylates siccayne to generate pestalodiol E, using dimethylallyl diphosphate (DMAPP) as cosubstrate. The probable oxidoreductase iacF is then involved in the epoxidation of pestalodiol F to pestalodiol F, which is further converted to pestalofone A by the short-chain dehydrogenase/reductase iacG. Iso-A82775C is subsequently generated from pestalofone A by the short-chain dehydrogenase/reductase iacC. Iso-A82775C is further condensed with maldoxin via a Diels-Alder reaction to produce the anticancer natural products chloropestolides A to E. The protein is Prenyltransferase iacE of Pestalotiopsis fici (strain W106-1 / CGMCC3.15140).